The primary structure comprises 182 residues: Alpha-S2-casein (182 aa).

Positions 1–15 (MKFFIFTCLLAVALA) are cleaved as a signal peptide. A phosphoserine mark is found at serine 22, serine 23, and serine 24.

Belongs to the alpha-casein family. In terms of tissue distribution, mammary gland specific. Secreted in milk.

It is found in the secreted. In terms of biological role, important role in the capacity of milk to transport calcium phosphate. This is Alpha-S2-casein (CSN1S2) from Oryctolagus cuniculus (Rabbit).